The chain runs to 599 residues: BICD family-like cargo adapter 1 (599 aa).

The disordered stretch occupies residues 1-27 (MELPISFLSDSSRPAASSERGDQAALG). The CC1 box motif lies at 76–80 (AARLG). The stretch at 80-341 (GKALLERNQD…WEAHCQVRSL (262 aa)) forms a coiled coil. A disordered region spans residues 352–375 (DSAVSTDSSMDESSETSSAKDVPA). Positions 405 to 536 (EDDGLEEQIK…LEAWQDDMHR (132 aa)) form a coiled coil.

It belongs to the BICDR family. As to quaternary structure, part of a tripartite complex with dynein and dynactin, acts an adapter linking the dynein motor complex and dynactin. Interacts with KIF1C. Interacts with RAB6A and RAB6B; interaction is specific to Rab6.

Its subcellular location is the cytoplasm. It is found in the cytoskeleton. It localises to the microtubule organizing center. The protein resides in the centrosome. Functionally, acts as an adapter protein linking the dynein motor complex to various cargos and converts dynein from a non-processive to a highly processive motor in the presence of dynactin. Facilitates the interaction between dynein and dynactin and activates dynein processivity (the ability to move along a microtubule for a long distance without falling off the track). Predominantly recruits 2 dyneins, which increases both the force and speed of the microtubule motor. Component of secretory vesicle machinery in developing neurons that acts as a regulator of neurite outgrowth. Regulates the secretory vesicle transport by controlling the accumulation of Rab6-containing secretory vesicles in the pericentrosomal region restricting anterograde secretory transport during the early phase of neuronal differentiation, thereby inhibiting neuritogenesis. The polypeptide is BICD family-like cargo adapter 1 (bicdl1) (Xenopus tropicalis (Western clawed frog)).